Here is a 280-residue protein sequence, read N- to C-terminus: Shikimate dehydrogenase (NADP(+)) (280 aa).

Residues 15 to 17 (SLS) and T62 each bind shikimate. K66 functions as the Proton acceptor in the catalytic mechanism. Shikimate-binding residues include N88 and D104. NADP(+)-binding positions include 128 to 132 (GAGGA), 151 to 156 (NRTEER), and I222. Residue Y224 participates in shikimate binding. Position 245 (G245) interacts with NADP(+).

Belongs to the shikimate dehydrogenase family. Homodimer.

The enzyme catalyses shikimate + NADP(+) = 3-dehydroshikimate + NADPH + H(+). It functions in the pathway metabolic intermediate biosynthesis; chorismate biosynthesis; chorismate from D-erythrose 4-phosphate and phosphoenolpyruvate: step 4/7. In terms of biological role, involved in the biosynthesis of the chorismate, which leads to the biosynthesis of aromatic amino acids. Catalyzes the reversible NADPH linked reduction of 3-dehydroshikimate (DHSA) to yield shikimate (SA). This Methanosarcina acetivorans (strain ATCC 35395 / DSM 2834 / JCM 12185 / C2A) protein is Shikimate dehydrogenase (NADP(+)).